The primary structure comprises 159 residues: Ribosomal RNA large subunit methyltransferase H (159 aa).

S-adenosyl-L-methionine contacts are provided by Leu-76 and Gly-108.

The protein belongs to the RNA methyltransferase RlmH family. Homodimer.

It localises to the cytoplasm. The enzyme catalyses pseudouridine(1915) in 23S rRNA + S-adenosyl-L-methionine = N(3)-methylpseudouridine(1915) in 23S rRNA + S-adenosyl-L-homocysteine + H(+). In terms of biological role, specifically methylates the pseudouridine at position 1915 (m3Psi1915) in 23S rRNA. The sequence is that of Ribosomal RNA large subunit methyltransferase H from Finegoldia magna (strain ATCC 29328 / DSM 20472 / WAL 2508) (Peptostreptococcus magnus).